We begin with the raw amino-acid sequence, 198 residues long: tRNA (pseudouridine(54)-N(1))-methyltransferase (198 aa).

S-adenosyl-L-methionine-binding positions include leucine 130, glycine 153, 176–181 (LSPLEL), and cysteine 186.

The protein belongs to the methyltransferase superfamily. TrmY family. As to quaternary structure, homodimer.

Its subcellular location is the cytoplasm. The catalysed reaction is pseudouridine(54) in tRNA + S-adenosyl-L-methionine = N(1)-methylpseudouridine(54) in tRNA + S-adenosyl-L-homocysteine + H(+). In terms of biological role, specifically catalyzes the N1-methylation of pseudouridine at position 54 (Psi54) in tRNAs. This chain is tRNA (pseudouridine(54)-N(1))-methyltransferase, found in Methanococcus maripaludis (strain C6 / ATCC BAA-1332).